The primary structure comprises 226 residues: Phosphate propanoyltransferase (226 aa).

CoA is bound at residue 44-46 (VSN). The Zn(2+) site is built by His48 and His50. Positions 72, 90, and 97 each coordinate CoA. Arg103 serves as a coordination point for phosphate. Glu109 lines the Zn(2+) pocket. A CoA-binding site is contributed by Phe116. His157, His159, and His204 together coordinate Zn(2+). Asn211 lines the CoA pocket.

Belongs to the PduL family. Full-length protein forms large oligomers. Homodimer, when purified in the absence of the encapsulation peptide (EP, residues 1-47). The EP may influence oligomerization. The cofactor is Zn(2+).

It localises to the bacterial microcompartment. The enzyme catalyses propanoyl-CoA + phosphate = propanoyl phosphate + CoA. Its pathway is polyol metabolism; 1,2-propanediol degradation. In terms of biological role, involved in 1,2-propanediol (1,2-PD) utilization within the bacterial microcompartment (BMC) dedicated to 1,2-PD degradation by catalyzing the conversion of propanoyl-CoA to propanoyl-phosphate. CoA is regenerated within the pdu BMC (for use by PduP) via this enzyme, although there must also be cofactor transport across the BMC. Directly targeted to the BMC. Phosphate is probably the first substrate to bind in the forward direction. CoA is probably the first substrate to bind in the reverse direction, and might bind to the enzyme as the BMC assembles, ensuring cofactor encapsulation. The chain is Phosphate propanoyltransferase from Rhodopseudomonas palustris (strain BisB18).